The primary structure comprises 574 residues: Aspartate--tRNA ligase (574 aa).

An L-aspartate-binding site is contributed by glutamate 169. Positions 193–196 (QLFK) are aspartate. Arginine 215 contacts L-aspartate. ATP is bound by residues 215 to 217 (RDE) and glutamine 224. Histidine 437 contributes to the L-aspartate binding site. Glutamate 471 contacts ATP. Residue arginine 478 participates in L-aspartate binding. 523-526 (GLDR) contributes to the ATP binding site.

It belongs to the class-II aminoacyl-tRNA synthetase family. Type 1 subfamily. In terms of assembly, homodimer.

The protein resides in the cytoplasm. The enzyme catalyses tRNA(Asp) + L-aspartate + ATP = L-aspartyl-tRNA(Asp) + AMP + diphosphate. In terms of biological role, catalyzes the attachment of L-aspartate to tRNA(Asp) in a two-step reaction: L-aspartate is first activated by ATP to form Asp-AMP and then transferred to the acceptor end of tRNA(Asp). This is Aspartate--tRNA ligase from Mycoplasma mycoides subsp. mycoides SC (strain CCUG 32753 / NCTC 10114 / PG1).